Consider the following 210-residue polypeptide: CLAVATA3/ESR (CLE)-related protein 4D (210 aa).

The signal sequence occupies residues 1–21 (MAKNAMLCLLILSVVLALAFA). Residues 21 to 83 (ATNKKDDEEP…SNQLPNNNWM (63 aa)) are required for secretion from the host cytoplasm to the host apoplasm. N-linked (GlcNAc...) asparagine glycosylation is found at asparagine 32 and asparagine 59. Residues 115–210 (RRKTGTHSQR…APAGPDPIHH (96 aa)) form a disordered region. Basic and acidic residues-rich tracts occupy residues 125–137 (HHEETTLEQEKRG), 144–158 (PIHHQDTTFEQEKRG), 165–179 (PIHHQDTTLEQEKRV), and 186–200 (PIHHQDTKFEQEKRG). An A-1 repeat occupies 127–135 (EETTLEQEK). A 4 X approximate repeat A region spans residues 129 to 198 (TTLEQEKRGA…HQDTKFEQEK (70 aa)). One copy of the CLE-1 repeat lies at 136–147 (RGAPAGPDPIHH). Residues 136 to 210 (RGAPAGPDPI…APAGPDPIHH (75 aa)) form a 4 X approximate repeat CLE region. Residues 148–156 (QDTTFEQEK) form an A-2 repeat. Residues 157 to 168 (RGAPAGPDPIHH) form a CLE-2 repeat. The stretch at 169 to 177 (QDTTLEQEK) is one A-3 repeat. One copy of the CLE-3 repeat lies at 178–189 (RVAGAGPDPIHH). The A-4 repeat unit spans residues 190–198 (QDTKFEQEK). The CLE-4 repeat unit spans residues 199–210 (RGAPAGPDPIHH).

This sequence belongs to the CLV3/ESR signal peptide family. As to expression, highly expressed exclusively within the dorsal esophageal gland cell during syncytium formation in host plants.

It is found in the secreted. The protein resides in the host cytoplasm. The protein localises to the host extracellular space. It localises to the extracellular space. Its subcellular location is the apoplast. Mimics host plant CLE extracellular signal peptides that regulate cell fate. May play a role in the differentiation or division of feeding cells (syncytia) induced in plant roots during infection. The chain is CLAVATA3/ESR (CLE)-related protein 4D (CLE-4D) from Globodera rostochiensis (Golden nematode worm).